The sequence spans 501 residues: Glycogenin-2 (501 aa).

5 residues coordinate UDP: leucine 42, threonine 44, asparagine 45, tyrosine 48, and arginine 110. Residues leucine 42, threonine 44, asparagine 45, tyrosine 48, arginine 110, lysine 119, aspartate 135, alanine 136, aspartate 137, asparagine 166, serine 167, aspartate 193, aspartate 196, and glutamine 197 each contribute to the UDP-alpha-D-glucose site. Aspartate 135, alanine 136, and aspartate 137 together coordinate UDP. Mn(2+) is bound at residue aspartate 135. Residue aspartate 137 participates in Mn(2+) binding. O-linked (Glc...) tyrosine glycosylation is present at tyrosine 228. Positions 245, 248, and 251 each coordinate UDP. A Mn(2+)-binding site is contributed by histidine 245. UDP-alpha-D-glucose is bound by residues glycine 248 and lysine 251. 3 positions are modified to phosphoserine: serine 368, serine 399, and serine 459.

Homodimer, tightly complexed to glycogen synthase. Requires Mn(2+) as cofactor. Self-glycosylated by the transfer of glucose residues from UDP-glucose to itself, forming an alpha-1,4-glycan of around 10 residues attached to Tyr-228. Detected in liver (at protein level). Expressed preferentially in liver, heart, and pancreas.

It is found in the cytoplasm. Its subcellular location is the nucleus. The enzyme catalyses L-tyrosyl-[glycogenin] + UDP-alpha-D-glucose = alpha-D-glucosyl-L-tyrosyl-[glycogenin] + UDP + H(+). The catalysed reaction is [1,4-alpha-D-glucosyl](n)-L-tyrosyl-[glycogenin] + UDP-alpha-D-glucose = [1,4-alpha-D-glucosyl](n+1)-L-tyrosyl-[glycogenin] + UDP + H(+). The protein operates within glycan biosynthesis; glycogen biosynthesis. Functionally, glycogenin participates in the glycogen biosynthetic process along with glycogen synthase and glycogen branching enzyme. It catalyzes the formation of a short alpha (1,4)-glucosyl chain covalently attached via a glucose 1-O-tyrosyl linkage to internal tyrosine residues and these chains act as primers for the elongation reaction catalyzed by glycogen synthase. The sequence is that of Glycogenin-2 (GYG2) from Homo sapiens (Human).